We begin with the raw amino-acid sequence, 340 residues long: MTRAGEVLPGFAGGTINLASAGLGARALFATDEFFGPLERMLKDEPAAFHPGLYDDHGKWMDGWETRRRRGAGHDYAVIALAAKGRIAGFDVDTSHFTGNYPSACSIEACHSAEDPDEATEWVQLLPVTGLGPNAHHFFAAHSDAVYSHIRLRIHPDGGIARLRVYGTPALDLKAMANETIDLASCLLGGRIVAFSNGHYGHERLIAPGRGANMGDGWETRRRREPGYDWIIVKLAARGHVERILVDTAHFKGNYPDACSLQAADLGGMTAECDMLVASSAMFWNELLPHRKLSADSVHEYGSDMLRHADPVTHVRLNIYPDGGVSRLRIYGRVADPRSR.

Belongs to the allantoicase family.

It carries out the reaction allantoate + H2O = (S)-ureidoglycolate + urea. It functions in the pathway nitrogen metabolism; (S)-allantoin degradation; (S)-ureidoglycolate from allantoate (aminidohydrolase route): step 1/1. The protein is Probable allantoicase of Rhizobium meliloti (strain 1021) (Ensifer meliloti).